Consider the following 136-residue polypeptide: MEITLPRVSLSLAVLLVIVCSVDAQNYLAFPRMGRSGYLAFPRMGRSHFKSETSADVTGCCGVGIKNEFLIGQDGKEEIRSACGARADCCEGLKEVVDQKNDGVYFSMCVPDITFAQASSVRSSEVFNKLKSLLEK.

The N-terminal stretch at 1–24 is a signal peptide; that stretch reads MEITLPRVSLSLAVLLVIVCSVDA. Residues Met-33 and Met-44 each carry the methionine amide modification. A propeptide spans 47–136 (carboxy-terminal peptide); it reads SHFKSETSAD…FNKLKSLLEK (90 aa).

The protein belongs to the SCP family.

The protein resides in the secreted. Its function is as follows. The cardioactive peptides enhance the contractions of the auricle in vitro. This is Small cardioactive peptides (SCP) from Lymnaea stagnalis (Great pond snail).